The primary structure comprises 99 residues: Plastocyanin A'/A'' (99 aa).

Residues 1-99 form the Plastocyanin-like domain; the sequence is IEVLLGSDDG…AGMVGKVTVN (99 aa). H37, C84, H87, and M92 together coordinate Cu cation.

It belongs to the plastocyanin family. Cu(2+) serves as cofactor.

It is found in the plastid. It localises to the chloroplast thylakoid membrane. In terms of biological role, participates in electron transfer between P700 and the cytochrome b6-f complex in photosystem I. The protein is Plastocyanin A'/A'' of Nicotiana tabacum (Common tobacco).